Here is a 598-residue protein sequence, read N- to C-terminus: Elongation factor 4 (598 aa).

Positions 4-181 (SKIRNFSIIA…AVIEKIPAPK (178 aa)) constitute a tr-type G domain. GTP contacts are provided by residues 16 to 21 (DHGKST) and 128 to 131 (NKID).

Belongs to the TRAFAC class translation factor GTPase superfamily. Classic translation factor GTPase family. LepA subfamily.

Its subcellular location is the cell membrane. It carries out the reaction GTP + H2O = GDP + phosphate + H(+). Required for accurate and efficient protein synthesis under certain stress conditions. May act as a fidelity factor of the translation reaction, by catalyzing a one-codon backward translocation of tRNAs on improperly translocated ribosomes. Back-translocation proceeds from a post-translocation (POST) complex to a pre-translocation (PRE) complex, thus giving elongation factor G a second chance to translocate the tRNAs correctly. Binds to ribosomes in a GTP-dependent manner. The sequence is that of Elongation factor 4 from Mycoplasma mobile (strain ATCC 43663 / 163K / NCTC 11711) (Mesomycoplasma mobile).